A 113-amino-acid polypeptide reads, in one-letter code: Small ribosomal subunit protein uS17 (113 aa).

This sequence belongs to the universal ribosomal protein uS17 family. In terms of assembly, part of the 30S ribosomal subunit.

One of the primary rRNA binding proteins, it binds specifically to the 5'-end of 16S ribosomal RNA. The polypeptide is Small ribosomal subunit protein uS17 (Sulfurisphaera tokodaii (strain DSM 16993 / JCM 10545 / NBRC 100140 / 7) (Sulfolobus tokodaii)).